The sequence spans 510 residues: NAD(P)H-quinone oxidoreductase subunit 2 A, chloroplastic (510 aa).

Transmembrane regions (helical) follow at residues 31–51, 57–77, 99–119, 124–144, 149–169, 183–203, 229–249, 295–315, 323–343, 354–374, 395–415, 418–438, and 484–504; these read FIFPECILIFGLILLLMIDLT, TPWLYFISSTSLVMSITALLF, IFQFLILLCSTLCIPLSVEYI, MAITEFLLFVLTATLGGMFLC, LITIFVAPECFSLCSYLLSGY, YLLMGGASSSILVYGFSWLYG, ISIALISITVGIGFKLSPAPF, WHLLLEILAILSMILGNLIAI, MLAYSSIGQIGYVIIGIIVGD, YMLFYIAMNLGTFACIVLFGL, ALSSALCLLSLGGIPPLAGFF, LYLFWCGWQAGLYFLVSIGLL, and MIVCVIASTIPGISMNPIIAI.

The protein belongs to the complex I subunit 2 family. NDH is composed of at least 16 different subunits, 5 of which are encoded in the nucleus.

It is found in the plastid. The protein localises to the chloroplast thylakoid membrane. The catalysed reaction is a plastoquinone + NADH + (n+1) H(+)(in) = a plastoquinol + NAD(+) + n H(+)(out). It catalyses the reaction a plastoquinone + NADPH + (n+1) H(+)(in) = a plastoquinol + NADP(+) + n H(+)(out). Its function is as follows. NDH shuttles electrons from NAD(P)H:plastoquinone, via FMN and iron-sulfur (Fe-S) centers, to quinones in the photosynthetic chain and possibly in a chloroplast respiratory chain. The immediate electron acceptor for the enzyme in this species is believed to be plastoquinone. Couples the redox reaction to proton translocation, and thus conserves the redox energy in a proton gradient. This is NAD(P)H-quinone oxidoreductase subunit 2 A, chloroplastic from Nymphaea alba (White water-lily).